The chain runs to 145 residues: Putative pre-16S rRNA nuclease (145 aa).

This sequence belongs to the YqgF nuclease family.

It localises to the cytoplasm. Its function is as follows. Could be a nuclease involved in processing of the 5'-end of pre-16S rRNA. The polypeptide is Putative pre-16S rRNA nuclease (Tropheryma whipplei (strain Twist) (Whipple's bacillus)).